The chain runs to 251 residues: Probable transcriptional regulatory protein Blon_1155/BLIJ_1182 (251 aa).

Belongs to the TACO1 family.

Its subcellular location is the cytoplasm. The polypeptide is Probable transcriptional regulatory protein Blon_1155/BLIJ_1182 (Bifidobacterium longum subsp. infantis (strain ATCC 15697 / DSM 20088 / JCM 1222 / NCTC 11817 / S12)).